The sequence spans 529 residues: Cytochrome P450 monooxygenase okaD (529 aa).

A helical membrane pass occupies residues 13–35 (LPAQHLLASLALVGALLSVGYLL). A heme-binding site is contributed by cysteine 435.

This sequence belongs to the cytochrome P450 family. Requires heme as cofactor.

The protein localises to the membrane. The enzyme catalyses okaramine C + 2 reduced [NADPH--hemoprotein reductase] + 2 O2 = okaramine A + 2 oxidized [NADPH--hemoprotein reductase] + 4 H2O + 2 H(+). It functions in the pathway alkaloid biosynthesis. Its function is as follows. Cytochrome P450 monooxygenase; part of the gene cluster that mediates the biosynthesis of okaramine B, a prenylated indole alkaloid that possesses an unusual octacyclic ring system, including a four-membered azetidine ring and an eight-membered azocine ring, and that exhibits insecticidal activity against silkworm larvae. Within the pathway, okaD likely catalyzes a key step in forming the eight-membered ring of okaramine A using as substrate okaramine C. The biosynthesis begins with the NRPS okaA that condenses two tryptophan molecules into cyclo(L-Trp-L-Trp). Prenylation by the prenyltransferase okaC then leads to the formation of cyclo(N8-(alpha,alpha-dimethylallyl)-L-Trp-6a-(alpha,alpha-dime-thylallyl)-L-Trp). This is followed by indole 2,3-epoxidation by the FAD-dependent monooxygenase okaB to facilitate the formation of the hexahydropyrrolo[2,3-b]indole (HPI) moiety of okaramine C. The cytochrome P450 monooxygenase okaD then likely catalyzes formation of the eight-membered ring of okaramine A. The dioxygenase okaE further forms the unusual 2-dimethyl-3-methyl-azetidine ring to yield 12-deshydroxyl okaramine E, as well as the hydroxylation of 12-deshydroxyl okaramine E to produce okaramine E. The cytochrome P450 monoxygenase okaG converts 12-deshydroxyl okaramine E into 3-desmethyl okaramine B which is further methylated by the methyltransferase okaF into okaramine B. In a shunt pathway, okaG and okaF together are also able to convert okaramine E into okaramine D. Okaramine H is produced by nonenzymatic conversion from okaramine A. The chain is Cytochrome P450 monooxygenase okaD from Penicillium ochrochloron.